Consider the following 236-residue polypeptide: Small ribosomal subunit protein uS2c (236 aa).

Belongs to the universal ribosomal protein uS2 family.

It localises to the plastid. The protein resides in the chloroplast. This is Small ribosomal subunit protein uS2c (rps2) from Oenothera biennis (German evening primrose).